The primary structure comprises 123 residues: Large ribosomal subunit protein uL18 (123 aa).

The protein belongs to the universal ribosomal protein uL18 family. Part of the 50S ribosomal subunit; part of the 5S rRNA/L5/L18/L25 subcomplex. Contacts the 5S and 23S rRNAs.

In terms of biological role, this is one of the proteins that bind and probably mediate the attachment of the 5S RNA into the large ribosomal subunit, where it forms part of the central protuberance. This Protochlamydia amoebophila (strain UWE25) protein is Large ribosomal subunit protein uL18.